A 739-amino-acid chain; its full sequence is MICOS complex subunit Mic60 (739 aa).

Residues 23–63 (ANNRQFGGSSSGSGGREQGRRQQEEQGQQGDQGYQGYQSLP) form a disordered region. Residues 47–61 (EQGQQGDQGYQGYQS) show a composition bias toward low complexity. Residues 69–89 (AGFGKVVLFVSPLAAVGGVIT) traverse the membrane as a helical segment. The disordered stretch occupies residues 154–219 (VTGLFGGGSG…PAAKPKDNPL (66 aa)). Residues 163–198 (GDDKSKKSKVEPVKATPAEEKRPSKPSEVSKTEAKP) are compositionally biased toward basic and acidic residues. Residues 199-212 (VSKPAAAAAPAPAA) are compositionally biased toward low complexity. Residues 283 to 339 (TAVATAERAAREAQEKIVACEIALSAAATAQNAKKVEAVRDKIKKLVDHIGNVKDEL) are a coiled coil.

This sequence belongs to the MICOS complex subunit Mic60 family. As to quaternary structure, component of the mitochondrial contact site and cristae organizing system (MICOS) complex. Interacts with the mitochondria-shaping protein Opa1.

It is found in the mitochondrion inner membrane. Its function is as follows. Component of the MICOS complex, a large protein complex of the mitochondrial inner membrane that plays crucial roles in the maintenance of crista junctions, inner membrane architecture, and formation of contact sites to the outer membrane. The chain is MICOS complex subunit Mic60 from Drosophila melanogaster (Fruit fly).